A 250-amino-acid chain; its full sequence is Transcriptional activator protein ExpR (250 aa).

The HTH luxR-type domain occupies 173–238; it reads KSQEADLFSQ…HAIRLGVEMN (66 aa). The H-T-H motif DNA-binding region spans 197-216; it reads YQEIALILGITTSTVKFHIG.

The protein belongs to the autoinducer-regulated transcriptional regulatory protein family.

In terms of biological role, functions as an OHLL responsive transcriptional regulator that acts in virulence (soft rot disease) through the activation of genes for plant tissue macerating enzymes. This is Transcriptional activator protein ExpR (expR) from Dickeya dadantii (strain 3937) (Erwinia chrysanthemi (strain 3937)).